Reading from the N-terminus, the 435-residue chain is Serine carboxypeptidase-like 16 (435 aa).

Positions 1–23 (MGSWIPKLLLLQLVLLLTKHADS) are cleaved as a signal peptide. 3 disulfide bridges follow: C82/C325, C246/C260, and C284/C291. N103 is a glycosylation site (N-linked (GlcNAc...) asparagine). S178 is an active-site residue. N305 carries N-linked (GlcNAc...) asparagine glycosylation. D360 is a catalytic residue. N376 carries N-linked (GlcNAc...) asparagine glycosylation. The active site involves H413.

It belongs to the peptidase S10 family. As to expression, expressed in seedlings, roots and leaves.

The protein resides in the secreted. Its function is as follows. Probable carboxypeptidase. This is Serine carboxypeptidase-like 16 (SCPL16) from Arabidopsis thaliana (Mouse-ear cress).